Reading from the N-terminus, the 311-residue chain is Ribonuclease HIII (311 aa).

The RNase H type-2 domain maps to 93 to 310 (LSAIGSDEVG…TKKALDIAKH (218 aa)). Residues Asp-99, Glu-100, and Asp-204 each coordinate a divalent metal cation.

Belongs to the RNase HII family. RnhC subfamily. Mn(2+) serves as cofactor. Mg(2+) is required as a cofactor.

The protein resides in the cytoplasm. The enzyme catalyses Endonucleolytic cleavage to 5'-phosphomonoester.. Endonuclease that specifically degrades the RNA of RNA-DNA hybrids. The protein is Ribonuclease HIII of Geobacillus kaustophilus (strain HTA426).